Consider the following 118-residue polypeptide: Immunoglobulin lambda variable 2-8 (118 aa).

The N-terminal stretch at 1-19 (MAWALLLLTLLTQGTGSWA) is a signal peptide. Residue glutamine 20 is modified to Pyrrolidone carboxylic acid. Residues 20-44 (QSALTQPPSASGSPGQSVTISCTGT) are framework-1. The Ig-like domain occupies 20 to 118 (QSALTQPPSA…CSSYAGSNNF (99 aa)). An intrachain disulfide couples cysteine 41 to cysteine 109. Residues 45–53 (SSDVGGYNY) form a complementarity-determining-1 region. The segment at 54 to 70 (VSWYQQHPGKAPKLMIY) is framework-2. The tract at residues 71–73 (EVS) is complementarity-determining-2. Residues 74 to 109 (KRPSGVPDRFSGSKSGNTASLTVSGLQAEDEADYYC) form a framework-3 region. Positions 76–97 (PSGVPDRFSGSKSGNTASLTVS) are disordered. The span at 85-97 (GSKSGNTASLTVS) shows a compositional bias: polar residues. Residues 110–118 (SSYAGSNNF) are complementarity-determining-3.

Immunoglobulins are composed of two identical heavy chains and two identical light chains; disulfide-linked.

The protein localises to the secreted. It is found in the cell membrane. Its function is as follows. V region of the variable domain of immunoglobulin light chains that participates in the antigen recognition. Immunoglobulins, also known as antibodies, are membrane-bound or secreted glycoproteins produced by B lymphocytes. In the recognition phase of humoral immunity, the membrane-bound immunoglobulins serve as receptors which, upon binding of a specific antigen, trigger the clonal expansion and differentiation of B lymphocytes into immunoglobulins-secreting plasma cells. Secreted immunoglobulins mediate the effector phase of humoral immunity, which results in the elimination of bound antigens. The antigen binding site is formed by the variable domain of one heavy chain, together with that of its associated light chain. Thus, each immunoglobulin has two antigen binding sites with remarkable affinity for a particular antigen. The variable domains are assembled by a process called V-(D)-J rearrangement and can then be subjected to somatic hypermutations which, after exposure to antigen and selection, allow affinity maturation for a particular antigen. This Homo sapiens (Human) protein is Immunoglobulin lambda variable 2-8.